The sequence spans 102 residues: DNA/RNA-binding protein Alba 2 (102 aa).

Positions 10, 13, 40, 42, 43, 46, and 86 each coordinate DNA.

It belongs to the histone-like Alba family. Forms homodimers and homotetramers; oligomerization is enhanced and stabilized by DNA. Interacts with Alba 1.

The protein localises to the cytoplasm. It localises to the chromosome. Binds double-stranded DNA tightly but without sequence specificity. Involved in DNA compaction. The polypeptide is DNA/RNA-binding protein Alba 2 (Aeropyrum pernix (strain ATCC 700893 / DSM 11879 / JCM 9820 / NBRC 100138 / K1)).